The primary structure comprises 291 residues: UDP-N-acetylenolpyruvoylglucosamine reductase (291 aa).

The FAD-binding PCMH-type domain maps to 22–187; the sequence is RIGGPARYFK…ASATFQLTKD (166 aa). The active site involves Arg166. Residue Cys214 is the Proton donor of the active site. Residue Glu283 is part of the active site.

This sequence belongs to the MurB family. FAD serves as cofactor.

It is found in the cytoplasm. It catalyses the reaction UDP-N-acetyl-alpha-D-muramate + NADP(+) = UDP-N-acetyl-3-O-(1-carboxyvinyl)-alpha-D-glucosamine + NADPH + H(+). It functions in the pathway cell wall biogenesis; peptidoglycan biosynthesis. Functionally, cell wall formation. This Chlamydia trachomatis serovar A (strain ATCC VR-571B / DSM 19440 / HAR-13) protein is UDP-N-acetylenolpyruvoylglucosamine reductase.